We begin with the raw amino-acid sequence, 397 residues long: Serpin B10 (397 aa).

A Nuclear localization signal motif is present at residues 74 to 77; the sequence is KKRK.

It belongs to the serpin family. Ov-serpin subfamily.

It is found in the nucleus. The protein localises to the cytoplasm. Protease inhibitor that may play a role in the regulation of protease activities during hematopoiesis and apoptosis induced by TNF. May regulate protease activities in the cytoplasm and in the nucleus. The protein is Serpin B10 (SERPINB10) of Bos taurus (Bovine).